The following is a 266-amino-acid chain: Undecaprenyl-diphosphatase 1 (266 aa).

A run of 8 helical transmembrane segments spans residues 1–21 (MSIIEIIVLALIQGFTEFLPI), 39–59 (QGLAFDVAVHVGTLIAVVIYF), 83–103 (SKLGWWIILGTIPAAILGLLL), 113–133 (SAWVIAVTTIIFGLLLWYADA), 141–161 (IYQLNWKTALIIGLAQAVAMI), 189–209 (FLLAIPIISMMGLYYTVELAL), 218–238 (TLLLGVVLSFLSAYVCIYMFL), and 244–264 (MGMLPFVIYRLLLGVGLIVFL).

Belongs to the UppP family.

The protein localises to the cell inner membrane. The catalysed reaction is di-trans,octa-cis-undecaprenyl diphosphate + H2O = di-trans,octa-cis-undecaprenyl phosphate + phosphate + H(+). Its function is as follows. Catalyzes the dephosphorylation of undecaprenyl diphosphate (UPP). Confers resistance to bacitracin. This chain is Undecaprenyl-diphosphatase 1, found in Pseudoalteromonas translucida (strain TAC 125).